The sequence spans 613 residues: Lysophospholipase 1 (613 aa).

The signal sequence occupies residues Met-1–Ala-21. The region spanning Asp-55 to Asp-593 is the PLA2c domain. Residues Asn-142, Asn-173, Asn-220, Asn-244, Asn-281, Asn-319, Asn-348, Asn-365, Asn-494, Asn-499, Asn-523, Asn-551, and Asn-572 are each glycosylated (N-linked (GlcNAc...) asparagine).

This sequence belongs to the lysophospholipase family.

It localises to the secreted. The enzyme catalyses a 1-acyl-sn-glycero-3-phosphocholine + H2O = sn-glycerol 3-phosphocholine + a fatty acid + H(+). Catalyzes the release of fatty acids from lysophospholipids. Required for survival under high osmolarity, for normal osmotic stress-induced gene expression, and for nutrient-mediated repression of sexual differentiation. This is Lysophospholipase 1 (plb1) from Schizosaccharomyces pombe (strain 972 / ATCC 24843) (Fission yeast).